The following is a 314-amino-acid chain: Olfactory receptor 1E1 (314 aa).

Residues 1 to 25 (MMGQNQTSISDFLLLGLPIQPEQQN) are Extracellular-facing. N5 carries an N-linked (GlcNAc...) asparagine glycan. The helical transmembrane segment at 26–49 (LCYALFLAMYLTTLLGNLLIIVLI) threads the bilayer. Over 50 to 57 (RLDSHLHT) the chain is Cytoplasmic. Residues 58 to 79 (PMYLFLSNLSFSDLCFSSVTIP) form a helical membrane-spanning segment. Residues 80-100 (KLLQNMQNQDPSIPYADCLTQ) lie on the Extracellular side of the membrane. An intrachain disulfide couples C97 to C189. A helical membrane pass occupies residues 101-120 (MYFFLLFGDLESFLLVAMAY). The Cytoplasmic portion of the chain corresponds to 121 to 139 (DRYVAICFALHYTAIMSPM). A helical membrane pass occupies residues 140–158 (LCLSLVALSWVLTTFHAML). The Extracellular portion of the chain corresponds to 159-195 (HTLLMARLCFCADNVIPHFFCDMSALLKLACSDTRVN). A helical membrane pass occupies residues 196–219 (EWVIFIMGGLIVVIPFLLILGSYA). Residues 220–236 (RIVSSILKVPSSKGICK) lie on the Cytoplasmic side of the membrane. The chain crosses the membrane as a helical span at residues 237–259 (AFSTCGSHLSVVSLFYGTVIGLY). The Extracellular portion of the chain corresponds to 260-272 (LCPSANSSTLKET). The chain crosses the membrane as a helical span at residues 273–292 (VMAMMYTVVTPMLNPFIYSL). Topologically, residues 293–314 (RNGDMKGALSRVIHQKKTFFSL) are cytoplasmic.

Belongs to the G-protein coupled receptor 1 family.

The protein resides in the cell membrane. In terms of biological role, odorant receptor. The protein is Olfactory receptor 1E1 (OR1E1) of Gorilla gorilla gorilla (Western lowland gorilla).